Consider the following 401-residue polypeptide: Glutamyl-tRNA reductase (401 aa).

Substrate is bound by residues 45 to 48, serine 101, 106 to 108, and glutamine 112; these read TCNR and EDQ. The active-site Nucleophile is cysteine 46. 177 to 182 contacts NADP(+); that stretch reads GYGEVG.

This sequence belongs to the glutamyl-tRNA reductase family. As to quaternary structure, homodimer.

It carries out the reaction (S)-4-amino-5-oxopentanoate + tRNA(Glu) + NADP(+) = L-glutamyl-tRNA(Glu) + NADPH + H(+). It participates in porphyrin-containing compound metabolism; protoporphyrin-IX biosynthesis; 5-aminolevulinate from L-glutamyl-tRNA(Glu): step 1/2. Catalyzes the NADPH-dependent reduction of glutamyl-tRNA(Glu) to glutamate 1-semialdehyde (GSA). This chain is Glutamyl-tRNA reductase, found in Clostridium beijerinckii (strain ATCC 51743 / NCIMB 8052) (Clostridium acetobutylicum).